We begin with the raw amino-acid sequence, 1370 residues long: MRPTDETYFETLETGLDDAFEVAEAARERGEDPTPNVEIPVAKDMADRVENILGIDGVAERVRDLDGEMSREEAALELVADFVDGRVGDYDTDAGKIEGAVRTAVALLTEGVVAAPIEGIDRVEVNDNDDGTQYVAVYYAGPIRSAGGTAQALSVLVADYARAMLGIDAFKPRDDEIERYAEEVDLYDSETGLQYSPKDAETTFITEHCPVMLDGEATGNEEVDGFRDLERIDTNSPRGGMCLVLAEGIALKAPKIQRYTRNLDEVAWPWLQDLIDGTIGADDADEDTPDAGSDSDATDEGDAPSASTDAEEPPRAAPSDKFLRDLIAGRPVFGHPSKNGGFRLRYGRARNHGNATAGVHPATMHLLDDFLATGTQIKTERPGKAAGIVPVDSIEGPTVKLANGDVRHINDPADALDVRNGVAEILDVGEYLVNYGEFVENNHELAPASYAPEWWIQDLDAAGADVQALRDSPYVDLTAPTADQAMAWATDYDAPLHPAYTYLWHDIDVEQFRALADAVADAHTDASDDDDRGVLVLDHTTTVRETLEALLVTHHQGDDTIRVDDWLPLARSLGVTESLDREWETLSEAAAEWPNAVRAVNEVAPFSVQERAPTRIGNRMGRPEKSESRDLSPAVHTLFPIGDAGGSQRDVADAARYAPDMSDTPGEIPVRVGDRVCPSCDEHTYESRCPDCGDWTDPHYECRDCGAVATPDESGRVECPNCGRDLDNVTTQVIDINDEYHGALRAVGERENAFDQLKGVKGLLSAEKTPEPMAKGVLRAKHDVTAFKDGTVRYDMTDLPVTAVTPAELDVTAGQFRELGYNQDIHGDPLEHDDQLVELRVQDVVLSDGAADHMLKTADFVDDLLTQYYGLDAFYDLDDRDDLVGELVFGMAPHTSAAVVGRVAGFTSASVGYAHPYFHAAKRRNCFHPETNVWFRDESGEWHHDPIETLVEARLDPDTADEDDFGALVQALDGDVFVPSVTEDGEETLQRVEAVSKHPAPDHLLAVETKRGRELTVTPDHSMRRWTGDGIERVDARELTAGDALPAPTQVPGDGETATSELRSESLDGTHPQRRFGDGGSVRTDEVVSVEPVRSSVDHTYSLTVAETNTLVANGLFTGQCDGDEDCVMLLMDGLINFSKSYLPDKRGGRMDAPLVMSSRIDPAEIDDEAHNIDIDREYPREFYEATRELADPEDVADLITLAESTVGTDEEYTGFGHTHATSNIHLGPSLSAYKTLGSMMDKMDAQLELARKLRSVAETDVAERVIEYHFLPDLIGNLRAFSRQETRCLDCGEKYRRMPLSGDCRECGGRVNLTVHEGSVNKYMDTAMRVATEYDCREYTKQRLEIMDRRLESVFEDDTNKQSGISDFM.

2 disordered regions span residues 279-317 (IGADDADEDTPDAGSDSDATDEGDAPSASTDAEEPPRAA) and 1041-1081 (AGDA…DGGS).

The protein belongs to the archaeal DNA polymerase II family. Heterodimer of a large subunit and a small subunit. In terms of processing, this protein undergoes a protein self splicing that involves a post-translational excision of the intervening region (intein) followed by peptide ligation.

The catalysed reaction is DNA(n) + a 2'-deoxyribonucleoside 5'-triphosphate = DNA(n+1) + diphosphate. It carries out the reaction Exonucleolytic cleavage in the 3'- to 5'-direction to yield nucleoside 5'-phosphates.. In terms of biological role, possesses two activities: a DNA synthesis (polymerase) and an exonucleolytic activity that degrades single-stranded DNA in the 3'- to 5'-direction. Has a template-primer preference which is characteristic of a replicative DNA polymerase. This chain is DNA polymerase II large subunit (polC), found in Halobacterium salinarum (strain ATCC 700922 / JCM 11081 / NRC-1) (Halobacterium halobium).